Here is a 269-residue protein sequence, read N- to C-terminus: uncharacterized protein (269 aa).

8 consecutive transmembrane segments (helical) span residues 9–29, 50–70, 82–102, 107–127, 147–167, 173–193, 200–220, and 224–244; these read YIIG…AHLF, FMLG…IVPL, FSII…VWAF, LYWT…MYGQ, LVFG…LHCT, VFSN…ILGF, LVSA…HLFA, and IFAF…FLLP.

It is found in the membrane. This is an uncharacterized protein from Schizosaccharomyces pombe (strain 972 / ATCC 24843) (Fission yeast).